Consider the following 716-residue polypeptide: Protein C-mannosyl-transferase DPY19L3 (716 aa).

Topologically, residues 1–43 are cytoplasmic; that stretch reads MMSIRQRREIRATEVSEDFPAQEENVKLENKLPSGCTSRRLWK. Residues 44–64 form a helical membrane-spanning segment; that stretch reads ILSLTIGGTIALCIGLLTSVY. Over 65–154 the chain is Lumenal; it reads LATLHENDLW…RVLPIQKYLE (90 aa). An N-linked (GlcNAc...) asparagine glycan is attached at N118. Residues 155-182 traverse the membrane as a helical segment; the sequence is PVYFYIYTLFGLQAIYVTALYITSWLLS. The Cytoplasmic segment spans residues 183–184; the sequence is GT. The name=3 intramembrane region spans 185–197; that stretch reads WLSGLLAAFWYVT. Residues 198–215 are Cytoplasmic-facing; that stretch reads NRIDTTRVEFTIPLRENW. The name=4 intramembrane region spans 216 to 230; that stretch reads ALPFFAIQIAAITYF. At 231 to 239 the chain is on the cytoplasmic side; that stretch reads LRPNLQPLS. The helical transmembrane segment at 240–256 threads the bilayer; it reads ERLTLLAIFISTFLFSL. The Lumenal portion of the chain corresponds to 257–262; sequence TWQFNQ. The helical transmembrane segment at 263-279 threads the bilayer; that stretch reads FMMLMQALVLFTLDSLD. The Cytoplasmic segment spans residues 280–289; the sequence is MLPAVKATWL. The helical transmembrane segment at 290–306 threads the bilayer; the sequence is YGIQITSLLLVCILQFF. The Lumenal segment spans residues 307 to 308; that stretch reads NS. A helical membrane pass occupies residues 309–323; that stretch reads MILGSLLISFNLSVF. Topologically, residues 324–338 are cytoplasmic; it reads IARKLQKNLKTGSFL. Residues 339–359 form a helical membrane-spanning segment; that stretch reads NRLGKLLLHLFMVLCLTLFLN. Residues 360–414 are Lumenal-facing; sequence NIIKKILNLKSDEHIFKFLKAKFGLGATRDFDANLYLCEEAFGLLPFNTFGRLSD. The helical transmembrane segment at 415 to 437 threads the bilayer; the sequence is TLLFYAYIFVLSITVIVAFVVAF. Residues 438-465 are Cytoplasmic-facing; that stretch reads HNLSDSTNQQSVGKMEKGTVDLKPETAY. A helical transmembrane segment spans residues 466–485; the sequence is NLIHTILFGFLALSTMRMKY. Topologically, residues 486–487 are lumenal; the sequence is LW. The chain crosses the membrane as a helical span at residues 488–499; the sequence is TSHMCVFASFGL. Residues 500–522 are Cytoplasmic-facing; sequence CSPEIWELLLKSVHLYNPKRICI. The helical transmembrane segment at 523-539 threads the bilayer; that stretch reads MRYSVPILILLYLCYKF. Topologically, residues 540 to 716 are lumenal; sequence WPGMMDELSE…FHVYKLSRNK (177 aa). Residue N704 is glycosylated (N-linked (GlcNAc...) asparagine).

It belongs to the dpy-19 family. In terms of tissue distribution, widely expressed.

The protein resides in the endoplasmic reticulum membrane. It carries out the reaction L-tryptophyl-[protein] + a di-trans,poly-cis-dolichyl beta-D-mannosyl phosphate = C-alpha-D-mannosyl-L-tryptophyl-[protein] + a di-trans,poly-cis-dolichyl phosphate + H(+). It functions in the pathway protein modification; protein glycosylation. In terms of biological role, C-mannosyltransferase that mediates C-mannosylation of tryptophan residues on target proteins. The reaction occurs on the luminal side of the endoplasmic reticulum and involves the transfer of a mannose unit from a dolichylphosphate mannose (Dol-P-Man) donor to an acceptor protein containing a WxxW or WxxC consensus sequence. C-mannosylates RSPO1, a Wnt signaling regulator, preferentially at the first Trp residue in the sequence WxxW. C-mannosylates the netrin receptor UNC5A, preferentially at the third tryptophan of WxxWxxWxxC sequence. Functionally, has no C-mannosyltransferase activity. The chain is Protein C-mannosyl-transferase DPY19L3 (DPY19L3) from Homo sapiens (Human).